The following is a 134-amino-acid chain: Acyl carrier protein, chloroplastic (134 aa).

The N-terminal 51 residues, 1–51 (MATTFSASVSTLATSLATPTRISFQKPALVSRTNLSFNLRRSIPTRLSVSC), are a transit peptide targeting the chloroplast. A Carrier domain is found at 55–130 (PETIEKVSKI…EAAELIEELV (76 aa)). Position 90 is an O-(pantetheine 4'-phosphoryl)serine (S90).

It belongs to the acyl carrier protein (ACP) family. Post-translationally, 4'-phosphopantetheine is transferred from CoA to a specific serine of apo-ACP by acpS. This modification is essential for activity because fatty acids are bound in thioester linkage to the sulfhydryl of the prosthetic group. Seed.

Its subcellular location is the plastid. It localises to the chloroplast. It functions in the pathway lipid metabolism; fatty acid biosynthesis. Carrier of the growing fatty acid chain in fatty acid biosynthesis. This chain is Acyl carrier protein, chloroplastic (ACL1.A3), found in Brassica napus (Rape).